The following is a 311-amino-acid chain: uncharacterized protein (311 aa).

A run of 10 helical transmembrane segments spans residues 6–26 (IFIL…KMLA), 33–53 (PFQV…PMAV), 70–90 (YLAL…QFAV), 97–117 (TAAV…YFIL), 123–143 (GITI…FNPA), 155–175 (LIGI…TVIS), 185–205 (YVFN…LLVV), 219–239 (ILVL…CYLG), 244–264 (TSAV…TVLA), and 265–285 (ILIL…FIII). EamA domains lie at 12–141 (AIFY…IIFN) and 166–292 (VVWS…INYS).

This sequence belongs to the EamA transporter family.

It localises to the cell membrane. This is an uncharacterized protein from Clostridium kluyveri (strain ATCC 8527 / DSM 555 / NBRC 12016 / NCIMB 10680 / K1).